The primary structure comprises 365 residues: Methionine import ATP-binding protein MetN (365 aa).

In terms of domain architecture, ABC transporter spans 26–261; the sequence is VRLVDLKRRF…PQSDITKSLL (236 aa). Residue 58 to 65 coordinates ATP; sequence GRSGAGKS.

The protein belongs to the ABC transporter superfamily. Methionine importer (TC 3.A.1.24) family. The complex is composed of two ATP-binding proteins (MetN), two transmembrane proteins (MetI) and a solute-binding protein (MetQ).

The protein resides in the cell inner membrane. It catalyses the reaction L-methionine(out) + ATP + H2O = L-methionine(in) + ADP + phosphate + H(+). The catalysed reaction is D-methionine(out) + ATP + H2O = D-methionine(in) + ADP + phosphate + H(+). In terms of biological role, part of the ABC transporter complex MetNIQ involved in methionine import. Responsible for energy coupling to the transport system. This chain is Methionine import ATP-binding protein MetN, found in Mesorhizobium japonicum (strain LMG 29417 / CECT 9101 / MAFF 303099) (Mesorhizobium loti (strain MAFF 303099)).